A 1668-amino-acid chain; its full sequence is Chitin synthase chs-2 (1668 aa).

The span at 1–19 (MMNTLDHRPLGRMETMEGK) shows a compositional bias: basic and acidic residues. Residues 1–51 (MMNTLDHRPLGRMETMEGKPDEDEVPTSSNSDAKGKGYYYSSGTVPTDDST) form a disordered region. The Cytoplasmic segment spans residues 1-116 (MMNTLDHRPL…HGFWHDASLQ (116 aa)). Residues 117 to 137 (VLKLATFLVLFLLTLGSAVVA) form a helical membrane-spanning segment. The Extracellular portion of the chain corresponds to 138 to 176 (KSTFILMTSAIGWGGQTITICNQVISEATQNTVKLKNAH). Residues 177-197 (VVKWVWATLLALSAPEALCFV) form a helical membrane-spanning segment. The Cytoplasmic segment spans residues 198-212 (RSMHRTMFRNVKRPT). A helical transmembrane segment spans residues 213 to 233 (FIQFVFVLIIETFHSIGVGIL). The Extracellular segment spans residues 234-242 (VFRIFPDLD). The chain crosses the membrane as a helical span at residues 243-263 (AVTAAQLTNAMCFVPAILSVI). Residues 264-271 (SRKPNKSA) lie on the Cytoplasmic side of the membrane. A helical transmembrane segment spans residues 272–292 (LLLVIIDFAAIAAQSSGFWAL). Residues 293 to 301 (PMFLPNLQK) are Extracellular-facing. A helical transmembrane segment spans residues 302–322 (HLVAIPVSLTLISLAWWQNFV). Topologically, residues 323 to 347 (HRDSVFPPVRTLAKFAQRLSERRSK) are cytoplasmic. The chain crosses the membrane as a helical span at residues 348–368 (TYAFVSLWKICIYVVCCFLFI). At 369 to 487 (SSRMKIEDML…IYSNYVERNQ (119 aa)) the chain is on the extracellular side. Asn396 carries an N-linked (GlcNAc...) asparagine glycan. Residues 488–508 (LTMAYDALWLVIFQFGAVFVC) form a helical membrane-spanning segment. The Cytoplasmic portion of the chain corresponds to 509–522 (YHSSKFACKVMMQR). Residues 523-543 (MGFALPMALSVPVTVLLLSTN) traverse the membrane as a helical segment. Residues 544 to 576 (CRMRQKDSCYGTNVLTVELFWQCNGASMSLADF) lie on the Extracellular side of the membrane. The chain crosses the membrane as a helical span at residues 577–597 (ILTPQTWIWLCWLASQFWITI). Over 598 to 1045 (HLWNPKHERL…ISIWYIIYQL (448 aa)) the chain is Cytoplasmic. Residues 1046–1066 (VMLISSILGPGTIFVMIIGAI) traverse the membrane as a helical segment. The Extracellular segment spans residues 1067 to 1074 (SISFSIDT). Residues 1075 to 1095 (LISLVIVSIPVVVFIVVCLTA) form a helical membrane-spanning segment. Residues 1096-1100 (KPEHQ) lie on the Cytoplasmic side of the membrane. Residues 1101–1121 (LICAQTIGAIFAMLMTAVVVG) traverse the membrane as a helical segment. Over 1122–1136 (TSLQLQKDGLLSPHS) the chain is Extracellular. A helical membrane pass occupies residues 1137–1157 (MFTVAVATSFLTAAILHPLEF). A topological domain (cytoplasmic) is located at residue Thr1158. The chain crosses the membrane as a helical span at residues 1159 to 1179 (CIIPGTIYFLAIPCMYMLLPI). Residues 1180-1375 (YSVCNMHTVS…RAGLIAIRNS (196 aa)) lie on the Extracellular side of the membrane. The segment at 1192 to 1216 (TREDPRPTEKNTLAKKTPGNLESGD) is disordered. Residues 1280 to 1335 (QIDKCSEADEDEQAEIEDALEMSNQSHAAKKNQKWKQAQSEAWLADKALKRAEREY) are a coiled coil. An N-linked (GlcNAc...) asparagine glycan is attached at Asn1303. A helical membrane pass occupies residues 1376–1396 (HTVYFLMINIVFIISVLVLQI). Residues 1397–1440 (HKDCLNIEWPLGPKFNHTVRPCYANHDDNQKEEVWVMTRLQLEP) are Cytoplasmic-facing. The helical transmembrane segment at 1441 to 1461 (IGLVFLIFFVSILVIQFLAML) threads the bilayer. Over 1462 to 1668 (CHRFGTLAHI…SSGDVELRRF (207 aa)) the chain is Extracellular. Positions 1625-1668 (RLFTAQQDQNSPTSDGNRRKSNSRPWDQPTSSATSSGDVELRRF) are disordered. 2 stretches are compositionally biased toward polar residues: residues 1628–1639 (TAQQDQNSPTSD) and 1647–1661 (SRPW…TSSG).

It belongs to the chitin synthase family. Class IV subfamily.

The protein localises to the cell membrane. It carries out the reaction [(1-&gt;4)-N-acetyl-beta-D-glucosaminyl](n) + UDP-N-acetyl-alpha-D-glucosamine = [(1-&gt;4)-N-acetyl-beta-D-glucosaminyl](n+1) + UDP + H(+). In terms of biological role, may be involved in chitin synthesis in the pharynx during larval development. This is Chitin synthase chs-2 from Caenorhabditis elegans.